The chain runs to 178 residues: Non-specific lipid transfer protein-like 1 (178 aa).

Positions 1–26 (MAVAARAAAVACLLVVGLAAVAGVDG) are cleaved as a signal peptide. 2 disulfide bridges follow: Cys-50/Cys-68 and Cys-69/Cys-110. Asn-99 is a glycosylation site (N-linked (GlcNAc...) asparagine). Residue Ala-149 is the site of GPI-anchor amidated alanine attachment. The propeptide at 150–178 (AARSPMASTTAVLVVAAAVAAPLLAFFHF) is removed in mature form.

The protein belongs to the plant LTP family. O-glycosylated on hydroxyprolines; noncontiguous hydroxylproline residues are glycosylated with arabinogalactan. As to expression, expressed in roots, stems, leaves, flowers and seeds.

It localises to the vacuole. The protein localises to the aleurone grain membrane. The chain is Non-specific lipid transfer protein-like 1 (LTPL1) from Oryza sativa subsp. japonica (Rice).